Here is a 213-residue protein sequence, read N- to C-terminus: mRNA-decapping protein OPG121 (213 aa).

The N(7)-methyl-GTP site is built by Glu-16 and Arg-50. The Nudix hydrolase domain occupies 30–209 (KDTHVFAACI…EYLSYIYNIL (180 aa)). The Nudix box motif lies at 111 to 132 (GKLDKKESIKDCLRRELKEESD). Mg(2+) is bound by residues Glu-126 and Glu-130. Residue Asp-151 participates in N(7)-methyl-GTP binding. Residue Glu-183 participates in Mg(2+) binding.

It belongs to the Nudix hydrolase family. In terms of assembly, interacts with the late transcription elongation factor VLTF-4/OPG110. Interacts with the late transcription factors VLTF-1. Mg(2+) is required as a cofactor. The cofactor is Mn(2+).

It carries out the reaction a 5'-end (N(7)-methyl 5'-triphosphoguanosine)-guanosine in mRNA + H2O = a 5'-end phospho-guanosine in mRNA + N(7)-methyl-GDP + 2 H(+). Acts with RNA polymerase to initiate transcription from late gene promoters. This is mRNA-decapping protein OPG121 (OPG121) from Cynomys gunnisoni (Gunnison's prairie dog).